We begin with the raw amino-acid sequence, 223 residues long: Ribonuclease T (223 aa).

Positions 1-11 (MSDDHFDDEQE) are enriched in acidic residues. Residues 1–21 (MSDDHFDDEQEGSSGGPRHPM) are disordered. One can recognise an Exonuclease domain in the interval 31-205 (VVVDVETGGF…YDTEKTAELF (175 aa)). Asp34, Glu36, His192, and Asp197 together coordinate Mg(2+). His192 acts as the Proton donor/acceptor in catalysis.

The protein belongs to the RNase T family. As to quaternary structure, homodimer. It depends on Mg(2+) as a cofactor.

Trims short 3' overhangs of a variety of RNA species, leaving a one or two nucleotide 3' overhang. Responsible for the end-turnover of tRNA: specifically removes the terminal AMP residue from uncharged tRNA (tRNA-C-C-A). Also appears to be involved in tRNA biosynthesis. This chain is Ribonuclease T, found in Pseudomonas fluorescens (strain ATCC BAA-477 / NRRL B-23932 / Pf-5).